The sequence spans 439 residues: Homogentisate 1,2-dioxygenase (439 aa).

Catalysis depends on histidine 293, which acts as the Proton acceptor. Histidine 336 and glutamate 342 together coordinate Fe cation. Positions 351 and 372 each coordinate homogentisate. Histidine 372 is a binding site for Fe cation.

Belongs to the homogentisate dioxygenase family. In terms of assembly, hexamer; dimer of trimers. It depends on Fe cation as a cofactor.

It catalyses the reaction homogentisate + O2 = 4-maleylacetoacetate + H(+). The protein operates within amino-acid degradation; L-phenylalanine degradation; acetoacetate and fumarate from L-phenylalanine: step 4/6. Functionally, involved in the catabolism of homogentisate (2,5-dihydroxyphenylacetate or 2,5-OH-PhAc), a central intermediate in the degradation of phenylalanine and tyrosine. Catalyzes the oxidative ring cleavage of the aromatic ring of homogentisate to yield maleylacetoacetate. This is Homogentisate 1,2-dioxygenase from Cupriavidus pinatubonensis (strain JMP 134 / LMG 1197) (Cupriavidus necator (strain JMP 134)).